Here is a 251-residue protein sequence, read N- to C-terminus: Myozenin-3 (251 aa).

The residue at position 31 (Ser-31) is a Phosphoserine. The tract at residues 50–67 (LLFQKRQRRVQKFTFELA) is binding to ACTN2, PPP3CA and TCAP. The interval 67–110 (AASQRAMLAGSARRKVTGTAESGTVANANGPEGPNYRSELHIFP) is binding to FLNC. Residues 79–102 (RRKVTGTAESGTVANANGPEGPNY) are disordered. The interval 186–207 (PSPNDYRNFNKTPVPFGGPLVG) is binding to ACTN2.

The protein belongs to the myozenin family. Interacts with ACTN2, LDB3, FLNC, PPP3CA and TCAP. In terms of tissue distribution, expressed specifically in skeletal muscle. Not detected in heart.

The protein resides in the cytoplasm. Its subcellular location is the myofibril. It localises to the sarcomere. The protein localises to the z line. Myozenins may serve as intracellular binding proteins involved in linking Z line proteins such as alpha-actinin, gamma-filamin, TCAP/telethonin, LDB3/ZASP and localizing calcineurin signaling to the sarcomere. Plays an important role in the modulation of calcineurin signaling. May play a role in myofibrillogenesis. This is Myozenin-3 from Homo sapiens (Human).